The chain runs to 251 residues: Ubiquinone/menaquinone biosynthesis C-methyltransferase UbiE (251 aa).

Residues T74, D95, 123–124 (NA), and S140 contribute to the S-adenosyl-L-methionine site.

The protein belongs to the class I-like SAM-binding methyltransferase superfamily. MenG/UbiE family.

The catalysed reaction is a 2-demethylmenaquinol + S-adenosyl-L-methionine = a menaquinol + S-adenosyl-L-homocysteine + H(+). It carries out the reaction a 2-methoxy-6-(all-trans-polyprenyl)benzene-1,4-diol + S-adenosyl-L-methionine = a 5-methoxy-2-methyl-3-(all-trans-polyprenyl)benzene-1,4-diol + S-adenosyl-L-homocysteine + H(+). The protein operates within quinol/quinone metabolism; menaquinone biosynthesis; menaquinol from 1,4-dihydroxy-2-naphthoate: step 2/2. It functions in the pathway cofactor biosynthesis; ubiquinone biosynthesis. Functionally, methyltransferase required for the conversion of demethylmenaquinol (DMKH2) to menaquinol (MKH2) and the conversion of 2-polyprenyl-6-methoxy-1,4-benzoquinol (DDMQH2) to 2-polyprenyl-3-methyl-6-methoxy-1,4-benzoquinol (DMQH2). This is Ubiquinone/menaquinone biosynthesis C-methyltransferase UbiE from Pectobacterium atrosepticum (strain SCRI 1043 / ATCC BAA-672) (Erwinia carotovora subsp. atroseptica).